Here is a 159-residue protein sequence, read N- to C-terminus: Ribosomal RNA large subunit methyltransferase H (159 aa).

S-adenosyl-L-methionine contacts are provided by residues Leu76, Gly108, and 127 to 132 (FGRLTL).

The protein belongs to the RNA methyltransferase RlmH family. In terms of assembly, homodimer.

The protein resides in the cytoplasm. It carries out the reaction pseudouridine(1915) in 23S rRNA + S-adenosyl-L-methionine = N(3)-methylpseudouridine(1915) in 23S rRNA + S-adenosyl-L-homocysteine + H(+). In terms of biological role, specifically methylates the pseudouridine at position 1915 (m3Psi1915) in 23S rRNA. The polypeptide is Ribosomal RNA large subunit methyltransferase H (Listeria monocytogenes serovar 1/2a (strain ATCC BAA-679 / EGD-e)).